Here is a 220-residue protein sequence, read N- to C-terminus: Membrane steroid-binding protein 1 (220 aa).

Residues 22 to 42 traverse the membrane as a helical segment; sequence VVFFTALALAFAIYQVISGWF. Residues 74-171 form the Cytochrome b5 heme-binding domain; the sequence is EITEEELKQY…SKYAKVGTVK (98 aa). The steroid-binding stretch occupies residues 74–171; sequence EITEEELKQY…SKYAKVGTVK (98 aa). Residues 174–220 are disordered; the sequence is GSEPETASVSEPTENVEQDAHVTTTPGKTVVDKSDDAPAETVLKKEE. The segment covering 178-200 has biased composition (polar residues); it reads ETASVSEPTENVEQDAHVTTTPG. Basic and acidic residues predominate over residues 203–220; that stretch reads VVDKSDDAPAETVLKKEE.

This sequence belongs to the cytochrome b5 family. MAPR subfamily. As to quaternary structure, interacts with BAK1 (via extracellular region). Expressed in cotyledons, stems, roots, leaves, flower and silique stalks, pistils and stigmas, but not in anthers.

Its subcellular location is the cell membrane. It localises to the endosome membrane. Its function is as follows. MSBP1 can bind to multiple steroid compounds with different affinities. Negatively regulates cell elongation and brassinosteroid signaling. May act as a coreceptor with BAK1 and enhances its endocytosis. In Arabidopsis thaliana (Mouse-ear cress), this protein is Membrane steroid-binding protein 1 (MSBP1).